We begin with the raw amino-acid sequence, 235 residues long: Uridylate kinase (235 aa).

9–12 (KLSG) contacts ATP. Residues 17 to 22 (GDQGYG) are involved in allosteric activation by GTP. Gly-51 provides a ligand contact to UMP. ATP is bound by residues Gly-52 and Arg-56. UMP contacts are provided by residues Asp-71 and 132 to 139 (CGNPFFTT). Thr-159, Tyr-165, and Asp-168 together coordinate ATP.

It belongs to the UMP kinase family. As to quaternary structure, homohexamer.

The protein resides in the cytoplasm. The enzyme catalyses UMP + ATP = UDP + ADP. It participates in pyrimidine metabolism; CTP biosynthesis via de novo pathway; UDP from UMP (UMPK route): step 1/1. Allosterically activated by GTP. Inhibited by UTP. Functionally, catalyzes the reversible phosphorylation of UMP to UDP. This chain is Uridylate kinase, found in Synechococcus sp. (strain WH7803).